A 498-amino-acid polypeptide reads, in one-letter code: Glutathione hydrolase 6 (498 aa).

At 1 to 49 the chain is on the cytoplasmic side; the sequence is MDATTGAVLYQKLQLWEPGMESEEEEEEEEIAEPLVLSLRRLQNTPGNK. The chain crosses the membrane as a helical; Signal-anchor for type II membrane protein span at residues 50-70; that stretch reads VGGLPGAWTRLLAGLLLLAVS. At 71–498 the chain is on the extracellular side; that stretch reads SSLALRQLQG…PSGCCPFQGY (428 aa). Residues N162, N167, and N376 are each glycosylated (N-linked (GlcNAc...) asparagine).

This sequence belongs to the gamma-glutamyltransferase family. In terms of assembly, heterodimer composed of the light and heavy chains. The active site is located in the light chain. Post-translationally, cleaved by autocatalysis into a large and a small subunit and the autocatalytic cleavage is essential to the functional activation of the enzyme.

The protein resides in the membrane. It carries out the reaction an N-terminal (5-L-glutamyl)-[peptide] + an alpha-amino acid = 5-L-glutamyl amino acid + an N-terminal L-alpha-aminoacyl-[peptide]. It catalyses the reaction glutathione + H2O = L-cysteinylglycine + L-glutamate. The catalysed reaction is an S-substituted glutathione + H2O = an S-substituted L-cysteinylglycine + L-glutamate. It functions in the pathway sulfur metabolism; glutathione metabolism. Its function is as follows. Hydrolyzes and transfers gamma-glutamyl moieties from glutathione and other gamma-glutamyl compounds to acceptors. The sequence is that of Glutathione hydrolase 6 from Rattus norvegicus (Rat).